The chain runs to 332 residues: Aquaporin-7-1 (332 aa).

Residues 1-66 (MSGQHQITEQ…RHAIRMPMAE (66 aa)) are Cytoplasmic-facing. The chain crosses the membrane as a helical span at residues 67–87 (FFGVALLIIFGAGSACQVVLS). Residues 88–100 (TNPNVASSDRGSF) are Extracellular-facing. The chain crosses the membrane as a helical span at residues 101-121 (LSINLGWAIGIAMGAWVSGGI). At 122–144 (SGGHINPAITIAMATYRGFPWRR) the chain is on the cytoplasmic side. Residues 127-129 (NPA) carry the NPA 1 motif. The helical transmembrane segment at 145-165 (VPSYIFAQVLGGVVGAALVYA) threads the bilayer. The Extracellular segment spans residues 166 to 199 (NYIHAIDIFEGGRHVRTQATASLFATYALPYMTQ). Residues 200 to 220 (VSCFFSEFLATAVLSMMVLAL) traverse the membrane as a helical segment. The Cytoplasmic portion of the chain corresponds to 221 to 230 (TDNRNGAPTN). A helical membrane pass occupies residues 231–251 (GLLPFALFVLFIGLGASLGME). Residues 252–283 (TAYALNPARDFGPRLFLAMSGYGKALFNYRSQ) are Extracellular-facing. An NPA 2 motif is present at residues 257–259 (NPA). The chain crosses the membrane as a helical span at residues 284 to 304 (YWLWAPIIAPVLGAQAGGLLY). The Cytoplasmic segment spans residues 305–332 (DTFLYDGDNSPIKWRRASSQECQLAEVV).

It belongs to the MIP/aquaporin (TC 1.A.8) family.

The protein localises to the membrane. It catalyses the reaction H2O(in) = H2O(out). In terms of biological role, water channel required to facilitate the transport of water across membranes. Does not mediate the transport carbon dioxide across the membrane. This is Aquaporin-7-1 from Laccaria bicolor (Bicoloured deceiver).